A 103-amino-acid polypeptide reads, in one-letter code: Large ribosomal subunit protein bL21 (103 aa).

This sequence belongs to the bacterial ribosomal protein bL21 family. Part of the 50S ribosomal subunit. Contacts protein L20.

Functionally, this protein binds to 23S rRNA in the presence of protein L20. This is Large ribosomal subunit protein bL21 from Ruminiclostridium cellulolyticum (strain ATCC 35319 / DSM 5812 / JCM 6584 / H10) (Clostridium cellulolyticum).